The chain runs to 78 residues: Probable Fe(2+)-trafficking protein (78 aa).

It belongs to the Fe(2+)-trafficking protein family. In terms of assembly, monomer.

In terms of biological role, could be a mediator in iron transactions between iron acquisition and iron-requiring processes, such as synthesis and/or repair of Fe-S clusters in biosynthetic enzymes. The sequence is that of Probable Fe(2+)-trafficking protein from Wigglesworthia glossinidia brevipalpis.